The primary structure comprises 339 residues: Ribosomal RNA small subunit methyltransferase H (339 aa).

Residues Gly44–Tyr46, Asp61, Phe88, Asp105, and Gln112 each bind S-adenosyl-L-methionine. Residues Pro263–Ala312 are disordered. Basic residues predominate over residues Arg301–Ala312.

This sequence belongs to the methyltransferase superfamily. RsmH family.

The protein resides in the cytoplasm. The catalysed reaction is cytidine(1402) in 16S rRNA + S-adenosyl-L-methionine = N(4)-methylcytidine(1402) in 16S rRNA + S-adenosyl-L-homocysteine + H(+). In terms of biological role, specifically methylates the N4 position of cytidine in position 1402 (C1402) of 16S rRNA. This is Ribosomal RNA small subunit methyltransferase H from Chelativorans sp. (strain BNC1).